Reading from the N-terminus, the 507-residue chain is RNA-splicing ligase RtcB homolog (507 aa).

Mn(2+) is bound by residues D121, C124, H229, H261, and H355. N228–E232 provides a ligand contact to GMP. GMP contacts are provided by residues H355–N356, G404–M407, S411, H430–G433, and K506. H430 functions as the GMP-histidine intermediate in the catalytic mechanism.

It belongs to the RtcB family. In terms of assembly, catalytic component of the tRNA-splicing ligase complex. Mn(2+) serves as cofactor.

The catalysed reaction is a 3'-end 3'-phospho-ribonucleotide-RNA + a 5'-end dephospho-ribonucleoside-RNA + GTP = a ribonucleotidyl-ribonucleotide-RNA + GMP + diphosphate. It carries out the reaction a 3'-end 2',3'-cyclophospho-ribonucleotide-RNA + a 5'-end dephospho-ribonucleoside-RNA + GTP + H2O = a ribonucleotidyl-ribonucleotide-RNA + GMP + diphosphate + H(+). Catalytic subunit of the tRNA-splicing ligase complex that acts by directly joining spliced tRNA halves to mature-sized tRNAs by incorporating the precursor-derived splice junction phosphate into the mature tRNA as a canonical 3',5'-phosphodiester. May act as an RNA ligase with broad substrate specificity, and may function toward other RNAs. This chain is RNA-splicing ligase RtcB homolog, found in Plasmodium yoelii yoelii.